The chain runs to 176 residues: NAD(P)H-quinone oxidoreductase subunit 6, chloroplastic (176 aa).

5 helical membrane passes run phenylalanine 10–threonine 30, proline 32–leucine 52, leucine 63–serine 83, leucine 92–valine 112, and phenylalanine 152–valine 172.

It belongs to the complex I subunit 6 family. As to quaternary structure, NDH is composed of at least 16 different subunits, 5 of which are encoded in the nucleus.

The protein resides in the plastid. Its subcellular location is the chloroplast thylakoid membrane. It carries out the reaction a plastoquinone + NADH + (n+1) H(+)(in) = a plastoquinol + NAD(+) + n H(+)(out). The catalysed reaction is a plastoquinone + NADPH + (n+1) H(+)(in) = a plastoquinol + NADP(+) + n H(+)(out). NDH shuttles electrons from NAD(P)H:plastoquinone, via FMN and iron-sulfur (Fe-S) centers, to quinones in the photosynthetic chain and possibly in a chloroplast respiratory chain. The immediate electron acceptor for the enzyme in this species is believed to be plastoquinone. Couples the redox reaction to proton translocation, and thus conserves the redox energy in a proton gradient. In Cicer arietinum (Chickpea), this protein is NAD(P)H-quinone oxidoreductase subunit 6, chloroplastic (ndhG).